Here is a 695-residue protein sequence, read N- to C-terminus: Threonine--tRNA ligase 1, cytoplasmic (695 aa).

The disordered stretch occupies residues 1-21 (MSEEKASSPSGKMDGEKPLNP). One can recognise a TGS domain in the interval 51–115 (DSKPIKVTLP…ETDCTLELLK (65 aa)). Lys-215 carries the post-translational modification N6-acetyllysine. Thr-218 is subject to Phosphothreonine. Tyr-270 carries the phosphotyrosine modification. Phosphothreonine is present on Thr-425.

The protein belongs to the class-II aminoacyl-tRNA synthetase family. In terms of assembly, homodimer. ISGylated.

It is found in the cytoplasm. The catalysed reaction is tRNA(Thr) + L-threonine + ATP = L-threonyl-tRNA(Thr) + AMP + diphosphate + H(+). Its function is as follows. Catalyzes the attachment of threonine to tRNA(Thr) in a two-step reaction: threonine is first activated by ATP to form Thr-AMP and then transferred to the acceptor end of tRNA(Thr). Also edits incorrectly charged tRNA(Thr) via its editing domain, at the post-transfer stage. In Rattus norvegicus (Rat), this protein is Threonine--tRNA ligase 1, cytoplasmic (Tars1).